A 68-amino-acid chain; its full sequence is Disintegrin EMF10B (68 aa).

The region spanning 1–68 is the Disintegrin domain; that stretch reads ELLQNSGNPC…SDCPRNPVFK (68 aa). 4 disulfide bridges follow: cysteine 10/cysteine 33, cysteine 24/cysteine 30, cysteine 29/cysteine 54, and cysteine 42/cysteine 61. Residues 46 to 48 carry the Cell attachment site; atypical (MGD) motif; that stretch reads MGD.

The protein belongs to the venom metalloproteinase (M12B) family. P-II subfamily. P-IIe sub-subfamily. As to quaternary structure, heterodimer with EMF10A; disulfide-linked. As to expression, expressed by the venom gland.

It localises to the secreted. Functionally, extremely potent and selective inhibitor of integrin alpha-5/beta-1 (ITGA5/ITGB1). Partially inhibits adhesion of cells expressing alpha-IIb/beta-3 (ITGA2B/ITGB3), alpha-V/beta-3 (ITGAV/ITGB3), and alpha-4/beta-1 (ITGA4/ITGB1) to appropriate ligands only at concentration higher than 500 nM. Weakly inhibits ADP-induced platelet aggregation. In Eristicophis macmahoni (Leaf-nosed viper), this protein is Disintegrin EMF10B.